The chain runs to 61 residues: Large ribosomal subunit protein bL32 (61 aa).

The span at 1 to 16 (MPTPKKKTSRSKRDMR) shows a compositional bias: basic residues. A disordered region spans residues 1–47 (MPTPKKKTSRSKRDMRRSHDGLTAPAIAVEKKTGELVRPHRAHKGAD). Over residues 29–38 (VEKKTGELVR) the composition is skewed to basic and acidic residues.

This sequence belongs to the bacterial ribosomal protein bL32 family.

This Bdellovibrio bacteriovorus (strain ATCC 15356 / DSM 50701 / NCIMB 9529 / HD100) protein is Large ribosomal subunit protein bL32.